We begin with the raw amino-acid sequence, 76 residues long: uncharacterized protein (76 aa).

The protein to M.jannaschii MJ0857 N-terminal region.

This is an uncharacterized protein from Methanocaldococcus jannaschii (strain ATCC 43067 / DSM 2661 / JAL-1 / JCM 10045 / NBRC 100440) (Methanococcus jannaschii).